We begin with the raw amino-acid sequence, 87 residues long: MLKLRLTRLGDKKRPSYRIVAMEALSKRDGGAIAYLGNYFPLEDSKVVLKEEEILNYLKNGAQPTRTVKSILVKAGLWAKFEESKKK.

This sequence belongs to the bacterial ribosomal protein bS16 family.

In Fusobacterium nucleatum subsp. nucleatum (strain ATCC 25586 / DSM 15643 / BCRC 10681 / CIP 101130 / JCM 8532 / KCTC 2640 / LMG 13131 / VPI 4355), this protein is Small ribosomal subunit protein bS16.